Reading from the N-terminus, the 113-residue chain is MNTVRVTFLLVFVLAVSLGQADKDENRMEMQEKTEQGKSYLDFAENLLLQKLEELEAKLLEEDSEESRNSRQKRCIGEGVPCDEKDPRCCSGLVCLKPTLHGIWYKSYYCYRK.

Residues 1–21 form the signal peptide; that stretch reads MNTVRVTFLLVFVLAVSLGQA. The propeptide occupies 22-74; sequence DKDENRMEMQEKTEQGKSYLDFAENLLLQKLEELEAKLLEEDSEESRNSRQKR. The disordered stretch occupies residues 61 to 82; the sequence is EEDSEESRNSRQKRCIGEGVPC. Disulfide bonds link C75-C90, C82-C95, and C89-C110.

Belongs to the neurotoxin 14 (magi-1) family. 01 (HNTX-16) subfamily. As to expression, expressed by the venom gland.

The protein localises to the secreted. Functionally, probable ion channel inhibitor. In Cyriopagopus hainanus (Chinese bird spider), this protein is U11-theraphotoxin-Hhn1q.